A 314-amino-acid chain; its full sequence is tRNA dimethylallyltransferase (314 aa).

Residue 15-22 (GPTATGKS) participates in ATP binding. 17-22 (TATGKS) is a substrate binding site. The tract at residues 40-43 (DSML) is interaction with substrate tRNA.

The protein belongs to the IPP transferase family. Monomer. The cofactor is Mg(2+).

It catalyses the reaction adenosine(37) in tRNA + dimethylallyl diphosphate = N(6)-dimethylallyladenosine(37) in tRNA + diphosphate. Catalyzes the transfer of a dimethylallyl group onto the adenine at position 37 in tRNAs that read codons beginning with uridine, leading to the formation of N6-(dimethylallyl)adenosine (i(6)A). This Pelotomaculum thermopropionicum (strain DSM 13744 / JCM 10971 / SI) protein is tRNA dimethylallyltransferase.